A 60-amino-acid chain; its full sequence is UPF0434 protein YPA_0693 (60 aa).

Belongs to the UPF0434 family.

The sequence is that of UPF0434 protein YPA_0693 from Yersinia pestis bv. Antiqua (strain Antiqua).